The chain runs to 619 residues: Pescadillo homolog (619 aa).

The segment at 303–324 is disordered; sequence ADKDQKDQDTIEDAEEVTEPTV. Acidic residues predominate over residues 312–324; the sequence is TIEDAEEVTEPTV. The region spanning 353 to 452 is the BRCT domain; the sequence is PTSQLFSKFI…ELVSVGDYAP (100 aa). Residues 456–567 form a disordered region; sequence LPPHLSPWGD…STKAALTPEE (112 aa). Coiled-coil stretches lie at residues 472-560 and 588-619; these read NAKA…ASTK and MQYGIEKKTNRVDELTKKRKQLEKKKKQLKDV. Positions 480 to 522 are enriched in acidic residues; the sequence is EAEEEEEEEEEDEEEEEEEEEIEVADGDEDQDDEEEEEIEDED. The segment covering 523-539 has biased composition (basic and acidic residues); sequence LKAQKELEMEVAGKKFS.

This sequence belongs to the pescadillo family. Component of the NOP7 complex, composed of ERB1, NOP7 and YTM1. The complex is held together by ERB1, which interacts with NOP7 via its N-terminal domain and with YTM1 via a high-affinity interaction between the seven-bladed beta-propeller domains of the 2 proteins. The NOP7 complex associates with the 66S pre-ribosome.

The protein resides in the nucleus. Its subcellular location is the nucleolus. It is found in the nucleoplasm. Functionally, component of the NOP7 complex, which is required for maturation of the 25S and 5.8S ribosomal RNAs and formation of the 60S ribosome. The sequence is that of Pescadillo homolog from Lodderomyces elongisporus (strain ATCC 11503 / CBS 2605 / JCM 1781 / NBRC 1676 / NRRL YB-4239) (Yeast).